Consider the following 139-residue polypeptide: MRIMGLDVGSKTVGVAISDPLGFTAQGLEIIKIDEESGNFGFDRLAELVKEYKVDKFVVGLPKNMNNTSGPRVEASQAYGDKITELFNLPVEYQDERLTTVQAERMLVEQADISRGKRKKVIDKLAAQLILQNYLDRMF.

It belongs to the YqgF nuclease family.

It localises to the cytoplasm. Could be a nuclease involved in processing of the 5'-end of pre-16S rRNA. In Streptococcus agalactiae serotype Ia (strain ATCC 27591 / A909 / CDC SS700), this protein is Putative pre-16S rRNA nuclease.